The following is a 500-amino-acid chain: UDP-GalNAc:beta-1,3-N-acetylgalactosaminyltransferase 2 (500 aa).

The Cytoplasmic segment spans residues 1–6; the sequence is MRNWLV. A helical; Signal-anchor for type II membrane protein transmembrane segment spans residues 7–23; the sequence is LLCPCVLGAALHLWLRL. Residues 24–500 are Lumenal-facing; the sequence is RSPPPACASG…CGDPCRCQAR (477 aa). Residues asparagine 116 and asparagine 174 are each glycosylated (N-linked (GlcNAc...) asparagine).

Belongs to the glycosyltransferase 31 family. Post-translationally, N-glycosylated. As to expression, expressed in all tissues examined, but at highest levels in testis, adipose tissue, skeletal muscle and ovary.

The protein resides in the golgi apparatus membrane. The protein localises to the endoplasmic reticulum. It catalyses the reaction 3-O-(N-acetyl-beta-D-glucosaminyl-(1-&gt;4)-alpha-D-mannosyl)-L-threonyl-[protein] + UDP-N-acetyl-alpha-D-galactosamine = 3-O-[beta-D-GalNAc-(1-&gt;3)-beta-D-GlcNAc-(1-&gt;4)-alpha-D-Man]-L-Thr-[protein] + UDP + H(+). Its pathway is protein modification; protein glycosylation. Its function is as follows. Beta-1,3-N-acetylgalactosaminyltransferase that synthesizes a unique carbohydrate structure, GalNAc-beta-1-3GlcNAc, on N- and O-glycans. Has no galactose nor galactosaminyl transferase activity toward any acceptor substrate. Involved in alpha-dystroglycan (DAG1) glycosylation: acts coordinately with GTDC2/POMGnT2 to synthesize a GalNAc-beta3-GlcNAc-beta-terminus at the 4-position of protein O-mannose in the biosynthesis of the phosphorylated O-mannosyl trisaccharide (N-acetylgalactosamine-beta-3-N-acetylglucosamine-beta-4-(phosphate-6-)mannose), a carbohydrate structure present in alpha-dystroglycan, which is required for binding laminin G-like domain-containing extracellular proteins with high affinity. In Homo sapiens (Human), this protein is UDP-GalNAc:beta-1,3-N-acetylgalactosaminyltransferase 2 (B3GALNT2).